An 839-amino-acid chain; its full sequence is Autophagy-related protein 9A (839 aa).

Ala2 carries the post-translational modification N-acetylalanine. At 2 to 61 (AQFDTEYQRLEASYSDSPPGEEDLLVHVAEGSKSPWHHIENLDLFFSRVYNLHQKNGFTC) the chain is on the cytoplasmic side. Residues 8–11 (YQRL) carry the Tyrosine-based sorting signal motif. A phosphoserine mark is found at Ser14, Ser16, and Ser18. Residues 62–84 (MLIGEMFELMQFLFVVAFTTFLV) traverse the membrane as a helical segment. At 85–128 (SCVDYDILFANKMVNHSLHPTEPVKVTLPDAFLPAQVCSARIQE) the chain is on the lumenal side. Asn99 carries an N-linked (GlcNAc...) asparagine glycan. The chain crosses the membrane as a helical span at residues 129–154 (NGSLITILVIAGVFWIHRLIKFIYNI). Topologically, residues 155–290 (CCYWEIHSFY…ELAQRLSNRI (136 aa)) are cytoplasmic. Residues 291 to 301 (LWIGIANFLLC) lie within the membrane without spanning it. At 302–319 (PLILIWQILYAFFSYAEV) the chain is on the cytoplasmic side. The stretch at 320–328 (LKREPGALG) is an intramembrane region. Residues 329–371 (ARCWSLYGRCYLRHFNELEHELQSRLNRGYKPASKYMNCFLSP) lie on the Cytoplasmic side of the membrane. A helical transmembrane segment spans residues 372-397 (LLTLLAKNGAFFAGSILAVLIALTIY). Residues 398–406 (DEDVLAVEH) are Lumenal-facing. Residues 407 to 424 (VLTTVTLLGVTVTVCRSF) form a helical membrane-spanning segment. Topologically, residues 425–470 (IPDQHMVFCPEQLLRVILAHIHYMPDHWQGNAHRSQTRDEFAQLFQ) are cytoplasmic. The stretch at 471-480 (YKAVFILEEL) is an intramembrane region. Over 481 to 483 (LSP) the chain is Cytoplasmic. Residues 484–492 (IVTPLILIF) lie within the membrane without spanning it. Residues 493-839 (CLRPRALEII…DELPPQVHKV (347 aa)) lie on the Cytoplasmic side of the membrane. Ser656 is modified (phosphoserine). 2 disordered regions span residues 657-686 (PLQPGAAPQGRVPSTMTGSGVDARTASSGS) and 717-839 (HKQQ…VHKV). Residues 724 to 736 (EPERHVWHRRESD) show a composition bias toward basic and acidic residues. Phosphoserine is present on residues Ser735, Ser738, Ser741, and Ser828. Composition is skewed to acidic residues over residues 737 to 747 (ESGESAPEEGG) and 823 to 832 (VPEEGSEDEL).

Belongs to the ATG9 family. Homotrimer; forms a homotrimer with a central pore that forms a path between the two membrane leaflets. Interacts (via cytoplasmic its C-terminus) with ATG2A. Interacts with SUPT20H. Interacts (via the tyrosine-based sorting signal motif) with AP4M1; promoting association with the AP-4 complex. Interacts with ARFIP1 and ARFIP2. Interacts with ATG4A; the interaction is direct and promotes ATG9A trafficking. Ufmylated in a DDRGK1 dependent manner.

The protein resides in the preautophagosomal structure membrane. The protein localises to the cytoplasmic vesicle. Its subcellular location is the autophagosome membrane. It is found in the golgi apparatus. It localises to the trans-Golgi network membrane. The protein resides in the late endosome membrane. The protein localises to the recycling endosome membrane. Its subcellular location is the endoplasmic reticulum membrane. It is found in the mitochondrion membrane. The enzyme catalyses a 1,2-diacyl-sn-glycero-3-phosphocholine(in) = a 1,2-diacyl-sn-glycero-3-phosphocholine(out). It catalyses the reaction a 1,2-diacyl-sn-glycero-3-phospho-L-serine(in) = a 1,2-diacyl-sn-glycero-3-phospho-L-serine(out). The catalysed reaction is a 1,2-diacyl-sn-glycero-3-phosphoethanolamine(in) = a 1,2-diacyl-sn-glycero-3-phosphoethanolamine(out). Phospholipid scramblase involved in autophagy by mediating autophagosomal membrane expansion. Cycles between the preautophagosomal structure/phagophore assembly site (PAS) and the cytoplasmic vesicle pool and supplies membrane for the growing autophagosome. Lipid scramblase activity plays a key role in preautophagosomal structure/phagophore assembly by distributing the phospholipids that arrive through ATG2 (ATG2A or ATG2B) from the cytoplasmic to the luminal leaflet of the bilayer, thereby driving autophagosomal membrane expansion. Also required to supply phosphatidylinositol 4-phosphate to the autophagosome initiation site by recruiting the phosphatidylinositol 4-kinase beta (PI4KB) in a process dependent on ARFIP2, but not ARFIP1. In addition to autophagy, also plays a role in necrotic cell death. The polypeptide is Autophagy-related protein 9A (Mus musculus (Mouse)).